We begin with the raw amino-acid sequence, 329 residues long: D-alanine--D-alanine ligase (329 aa).

The ATP-grasp domain maps to 120 to 326 (KLWLSAIGIP…FADYLEQILR (207 aa)). An ATP-binding site is contributed by 150–205 (ALAKWGKVFIKAASQGSSVGCYSASNEADLVKGIADAFGYSEQVLIEKAVKPRELE). Positions 280, 293, and 295 each coordinate Mg(2+).

Belongs to the D-alanine--D-alanine ligase family. Requires Mg(2+) as cofactor. It depends on Mn(2+) as a cofactor.

It is found in the cytoplasm. It carries out the reaction 2 D-alanine + ATP = D-alanyl-D-alanine + ADP + phosphate + H(+). The protein operates within cell wall biogenesis; peptidoglycan biosynthesis. Functionally, cell wall formation. The polypeptide is D-alanine--D-alanine ligase (Aeromonas hydrophila subsp. hydrophila (strain ATCC 7966 / DSM 30187 / BCRC 13018 / CCUG 14551 / JCM 1027 / KCTC 2358 / NCIMB 9240 / NCTC 8049)).